Here is a 264-residue protein sequence, read N- to C-terminus: Glycerol uptake facilitator protein (264 aa).

Residues 1-3 lie on the Cytoplasmic side of the membrane; sequence MDK. A helical transmembrane segment spans residues 4–32; it reads SLKANCIGEFLGTALLIFFGVGCVAALKV. At 33-37 the chain is on the periplasmic side; the sequence is AGASF. A helical membrane pass occupies residues 38–58; sequence GLWEISIMWGMGVALAVYATA. At 59-61 the chain is on the cytoplasmic side; the sequence is GLS. Residues 62 to 65 lie within the membrane without spanning it; sequence GAHL. Positions 66-68 match the NPA 1 motif; that stretch reads NPA. The segment at residues 66 to 76 is an intramembrane region (helical); that stretch reads NPAVTIALWKF. At 77–82 the chain is on the cytoplasmic side; sequence ACFDGK. Residues 83-106 form a helical membrane-spanning segment; sequence KVIPYIISQMLGAFFAAALVYALY. Residues 107-141 lie on the Periplasmic side of the membrane; it reads RNVFIDYETVHNIVRGTQESLSLAGTFSTYPHPSL. The helical transmembrane segment at 142 to 167 threads the bilayer; sequence SIGGAFAVEFVITAILMALIMALTDD. Over 168–175 the chain is Cytoplasmic; that stretch reads GNGVPRGP. A helical transmembrane segment spans residues 176–192; it reads LAPLLIGILIAVIGGAM. The Periplasmic segment spans residues 193–196; that stretch reads GPLT. An intramembrane segment occupies 197–200; that stretch reads GFAM. The short motif at 201–203 is the NPA 2 element; it reads NPA. The segment at residues 201 to 214 is an intramembrane region (helical); it reads NPARDFGPKFFAYL. The Periplasmic portion of the chain corresponds to 215 to 229; it reads AGWGELALTGGREIP. A helical transmembrane segment spans residues 230 to 252; it reads YFIVPMVAPVLGALAGAWLYKKA. Over 253–264 the chain is Cytoplasmic; the sequence is IGGNLPCNCGCE.

This sequence belongs to the MIP/aquaporin (TC 1.A.8) family.

It localises to the cell inner membrane. The enzyme catalyses glycerol(in) = glycerol(out). Its function is as follows. Mediates glycerol diffusion across the cytoplasmic membrane via a pore-type mechanism. In Haemophilus influenzae (strain ATCC 51907 / DSM 11121 / KW20 / Rd), this protein is Glycerol uptake facilitator protein (glpF).